Here is a 183-residue protein sequence, read N- to C-terminus: Large ribosomal subunit protein eL18 (183 aa).

The interval 150 to 183 is disordered; the sequence is RHFGPAPGAPRSHTKPYVRTKGHEKARPSRRANV.

It belongs to the eukaryotic ribosomal protein eL18 family.

It localises to the cytoplasm. The chain is Large ribosomal subunit protein eL18 (RpL18) from Bombyx mori (Silk moth).